The following is a 341-amino-acid chain: DNA-directed RNA polymerase subunit alpha (341 aa).

An alpha N-terminal domain (alpha-NTD) region spans residues 1–223; it reads MEQKRPQLKA…DELSVFGNVE (223 aa). The segment at 268 to 341 is alpha C-terminal domain (alpha-CTD); the sequence is PQPFPTDQDT…LAQFGLALRD (74 aa).

The protein belongs to the RNA polymerase alpha chain family. Homodimer. The RNAP catalytic core consists of 2 alpha, 1 beta, 1 beta' and 1 omega subunit. When a sigma factor is associated with the core the holoenzyme is formed, which can initiate transcription.

The enzyme catalyses RNA(n) + a ribonucleoside 5'-triphosphate = RNA(n+1) + diphosphate. In terms of biological role, DNA-dependent RNA polymerase catalyzes the transcription of DNA into RNA using the four ribonucleoside triphosphates as substrates. This is DNA-directed RNA polymerase subunit alpha from Deinococcus radiodurans (strain ATCC 13939 / DSM 20539 / JCM 16871 / CCUG 27074 / LMG 4051 / NBRC 15346 / NCIMB 9279 / VKM B-1422 / R1).